The sequence spans 421 residues: Glucose-1-phosphate adenylyltransferase (421 aa).

Residues tyrosine 109, glycine 175, 190–191 (EK), and serine 208 each bind alpha-D-glucose 1-phosphate.

This sequence belongs to the bacterial/plant glucose-1-phosphate adenylyltransferase family. As to quaternary structure, homotetramer.

The enzyme catalyses alpha-D-glucose 1-phosphate + ATP + H(+) = ADP-alpha-D-glucose + diphosphate. Its pathway is glycan biosynthesis; glycogen biosynthesis. Functionally, involved in the biosynthesis of ADP-glucose, a building block required for the elongation reactions to produce glycogen. Catalyzes the reaction between ATP and alpha-D-glucose 1-phosphate (G1P) to produce pyrophosphate and ADP-Glc. This chain is Glucose-1-phosphate adenylyltransferase, found in Teredinibacter turnerae (strain ATCC 39867 / T7901).